A 670-amino-acid polypeptide reads, in one-letter code: DNA ligase (670 aa).

NAD(+) contacts are provided by residues 34-38 (DAEYD), 83-84 (SL), and Glu-117. The active-site N6-AMP-lysine intermediate is Lys-119. Positions 140, 177, 293, and 317 each coordinate NAD(+). Zn(2+) contacts are provided by Cys-411, Cys-414, Cys-429, and Cys-434. The 80-residue stretch at 591–670 (KVGGRFTGKT…DEFLAMLEEG (80 aa)) folds into the BRCT domain.

Belongs to the NAD-dependent DNA ligase family. LigA subfamily. The cofactor is Mg(2+). Mn(2+) serves as cofactor.

It carries out the reaction NAD(+) + (deoxyribonucleotide)n-3'-hydroxyl + 5'-phospho-(deoxyribonucleotide)m = (deoxyribonucleotide)n+m + AMP + beta-nicotinamide D-nucleotide.. Its function is as follows. DNA ligase that catalyzes the formation of phosphodiester linkages between 5'-phosphoryl and 3'-hydroxyl groups in double-stranded DNA using NAD as a coenzyme and as the energy source for the reaction. It is essential for DNA replication and repair of damaged DNA. This chain is DNA ligase, found in Geobacter sulfurreducens (strain ATCC 51573 / DSM 12127 / PCA).